We begin with the raw amino-acid sequence, 1280 residues long: Dynactin subunit 1 (1280 aa).

The segment at 1–26 (MAQSKRHMYNRTPSGSRMSTEASARP) is disordered. A compositionally biased stretch (polar residues) spans 11–22 (RTPSGSRMSTEA). Residues 48–90 (GATLFATGKWVGVILDEAKGKNDGTVQGRKYFTCDEGHGIFVR) enclose the CAP-Gly domain. Residues 99 to 223 (DGADTTSPET…SKEEEGLRDQ (125 aa)) are disordered. Positions 102–114 (DTTSPETPDSSAS) are enriched in polar residues. Residues Thr-108, Thr-145, Thr-146, and Thr-147 each carry the phosphothreonine modification. The segment covering 129–152 (SKLRGLKPKKAPTARKTTTRRPKP) has biased composition (basic residues). The segment covering 161 to 205 (AGPSSSLGPSGSASAGELSSSEPSTPAQTPLAAPIIPTPALTSPG) has biased composition (low complexity). Residue Ser-179 is modified to Phosphoserine; by PLK1. Phosphoserine; by CDK1 is present on Ser-212. Basic and acidic residues predominate over residues 214 to 223 (SKEEEGLRDQ). Coiled coils occupy residues 214 to 513 (SKEE…ADYQ) and 942 to 1048 (LKLE…EGLR). Residues 910–1280 (EYDAERPPSK…LHQLHGRLIS (371 aa)) are interaction with HPS6. The disordered stretch occupies residues 1064 to 1089 (GEEQQRGGTPGQAPGALPGPGPVKDS). The stretch at 1184 to 1213 (SAQLMEQVAQLKSLSDTIEKLKDEVLKETV) forms a coiled coil.

The protein belongs to the dynactin 150 kDa subunit family. As to quaternary structure, monomer and homodimer. Subunit of dynactin, a multiprotein complex part of a tripartite complex with dynein and a adapter, such as BICDL1, BICD2 or HOOK3. The dynactin complex is built around ACTR1A/ACTB filament and consists of an actin-related filament composed of a shoulder domain, a pointed end and a barbed end. Its length is defined by its flexible shoulder domain. The soulder is composed of 2 DCTN1 subunits, 4 DCTN2 and 2 DCTN3. DCTN1/p150(glued) binds directly to microtubules and to cytoplasmic dynein. The 4 DCNT2 (via N-terminus) bind the ACTR1A filament and act as molecular rulers to determine the length. The pointed end is important for binding dynein-dynactin cargo adapters. Consists of 4 subunits: ACTR10, DCNT4, DCTN5 and DCTN6. The barbed end is composed of a CAPZA1:CAPZB heterodimers, which binds ACTR1A/ACTB filament and dynactin and stabilizes dynactin. Interacts with the C-terminus of MAPRE1, MAPRE2 and MAPRE3. Interacts (via C-terminus) with SNX6. Interacts with CLN3, DYNAP, ECPAS and FBXL5. Interacts with MISP; this interaction regulates its distribution at the cell cortex. Interacts with CEP131. Interacts with CEP126. Interacts with CLIP1. Interacts with dynein intermediate chain and dynein heavy chain. Interacts with PLK1 (via POLO-box domain). Interacts with TBCB. Binds preferentially to tyrosinated microtubules than to detyrosinated microtubules. Interacts with PARD6A. Interacts with HPS6. Interacts with KIF3A. Interacts with BICD2. Interacts with DST (isoform 9). Interacts with DST (isoform 1). Identified in a complex with MREG and RILP. Interacts with BCCIP (isoform 2/alpha). Interacts with DCDC1. Interacts with AKNA. Interacts with DYNC1I2. Interacts with RUFY3 and RUFY4. Ubiquitinated by a SCF complex containing FBXL5, leading to its degradation by the proteasome. In terms of processing, phosphorylation by SLK at Thr-145, Thr-146 and Thr-147 targets DCTN1 to the centrosome. It is uncertain if SLK phosphorylates all three threonines or one or two of them. PLK1-mediated phosphorylation at Ser-179 is essential for its localization in the nuclear envelope and promotes its dissociation from microtubules during early mitosis and positively regulates nuclear envelope breakdown during prophase. In terms of tissue distribution, ubiquitous with a high level expression observed in the brain (at protein level).

It localises to the cytoplasm. Its subcellular location is the cytoskeleton. The protein resides in the microtubule organizing center. The protein localises to the centrosome. It is found in the centriole. It localises to the spindle. Its subcellular location is the nucleus envelope. The protein resides in the cell cortex. Part of the dynactin complex that activates the molecular motor dynein for ultra-processive transport along microtubules. Plays a key role in dynein-mediated retrograde transport of vesicles and organelles along microtubules by recruiting and tethering dynein to microtubules. Binds to both dynein and microtubules providing a link between specific cargos, microtubules and dynein. Essential for targeting dynein to microtubule plus ends, recruiting dynein to membranous cargos and enhancing dynein processivity (the ability to move along a microtubule for a long distance without falling off the track). Can also act as a brake to slow the dynein motor during motility along the microtubule. Can regulate microtubule stability by promoting microtubule formation, nucleation and polymerization and by inhibiting microtubule catastrophe in neurons. Inhibits microtubule catastrophe by binding both to microtubules and to tubulin, leading to enhanced microtubule stability along the axon. Plays a role in metaphase spindle orientation. Plays a role in centriole cohesion and subdistal appendage organization and function. Its recruitment to the centriole in a KIF3A-dependent manner is essential for the maintenance of centriole cohesion and the formation of subdistal appendage. Also required for microtubule anchoring at the mother centriole. Plays a role in primary cilia formation. This Rattus norvegicus (Rat) protein is Dynactin subunit 1 (Dctn1).